The chain runs to 450 residues: Gluconate permease (450 aa).

12 helical membrane passes run 6–26 (HDAY…VLIT), 30–50 (VHPF…SGMP), 60–80 (DGFG…TMLG), 116–136 (VGIP…VFIV), 142–162 (VSLI…HGLV), 183–203 (ILYG…LFGA), 233–253 (FGVT…KTFA), 269–289 (MIGH…YTFG), 312–332 (AIVM…ASGV), 338–358 (HLAV…AAVI), 366–386 (TVAT…IPGV), and 430–450 (AMET…SLVL).

It belongs to the GntP permease family.

It is found in the cell inner membrane. Its pathway is carbohydrate acid metabolism; D-gluconate degradation. This is Gluconate permease (gnuT) from Pseudomonas aeruginosa (strain ATCC 15692 / DSM 22644 / CIP 104116 / JCM 14847 / LMG 12228 / 1C / PRS 101 / PAO1).